The primary structure comprises 146 residues: Large ribosomal subunit protein uL15 (146 aa).

The interval 1 to 54 (MTIKLHDLRPAPGSKTPRTRVGRGEGSKGKTAGRGTKGTKARKQVPTTFEGGQM) is disordered.

It belongs to the universal ribosomal protein uL15 family. As to quaternary structure, part of the 50S ribosomal subunit.

Binds to the 23S rRNA. The chain is Large ribosomal subunit protein uL15 from Mycobacterium marinum (strain ATCC BAA-535 / M).